The following is a 159-amino-acid chain: Small ribosomal subunit protein uS4 (159 aa).

The 53-residue stretch at 106–158 (RRLQTIVYRMGLAKSIHHARQLIVHGHVAVAGRRVTSPGFLVPRELEDKISLI) folds into the S4 RNA-binding domain.

This sequence belongs to the universal ribosomal protein uS4 family. As to quaternary structure, part of the 30S ribosomal subunit. Contacts protein S5. The interaction surface between S4 and S5 is involved in control of translational fidelity.

One of the primary rRNA binding proteins, it binds directly to 16S rRNA where it nucleates assembly of the body of the 30S subunit. In terms of biological role, with S5 and S12 plays an important role in translational accuracy. This Pyrobaculum aerophilum (strain ATCC 51768 / DSM 7523 / JCM 9630 / CIP 104966 / NBRC 100827 / IM2) protein is Small ribosomal subunit protein uS4.